Reading from the N-terminus, the 199-residue chain is Probable molybdenum cofactor guanylyltransferase (199 aa).

GTP contacts are provided by residues Leu-6–Gly-8, Lys-18, Asp-65, and Asp-97. Residue Asp-97 coordinates Mg(2+).

This sequence belongs to the MobA family. Mg(2+) is required as a cofactor.

Its subcellular location is the cytoplasm. The catalysed reaction is Mo-molybdopterin + GTP + H(+) = Mo-molybdopterin guanine dinucleotide + diphosphate. Functionally, transfers a GMP moiety from GTP to Mo-molybdopterin (Mo-MPT) cofactor (Moco or molybdenum cofactor) to form Mo-molybdopterin guanine dinucleotide (Mo-MGD) cofactor. The polypeptide is Probable molybdenum cofactor guanylyltransferase (Staphylococcus aureus (strain COL)).